A 139-amino-acid chain; its full sequence is Transcription antitermination protein NusB (139 aa).

Belongs to the NusB family.

Its function is as follows. Involved in transcription antitermination. Required for transcription of ribosomal RNA (rRNA) genes. Binds specifically to the boxA antiterminator sequence of the ribosomal RNA (rrn) operons. This Pectobacterium carotovorum subsp. carotovorum (strain PC1) protein is Transcription antitermination protein NusB.